Reading from the N-terminus, the 406-residue chain is uncharacterized protein (406 aa).

Gly-2 carries the N-myristoyl glycine; by host lipid modification. A disordered region spans residues 291–406 (QLESTTEVKP…FQYNKPTYDI (116 aa)). Positions 296–310 (TEVKPESTTEVKPES) are enriched in basic and acidic residues. Positions 311–323 (TSEVQPESTTEFQ) are enriched in polar residues. Low complexity-rich tracts occupy residues 324–333 (PESTTVVEPE), 341–351 (ESTTEFQPEST), and 359–369 (TTEPQVESTTE). Polar residues predominate over residues 370-406 (FQPESSTEPQVESTVEVQAESMNESSYFQYNKPTYDI).

This is an uncharacterized protein from Acanthamoeba polyphaga (Amoeba).